Reading from the N-terminus, the 382-residue chain is Porphobilinogen deaminase, chloroplastic (382 aa).

The N-terminal 62 residues, 1–62 (MDIASSSLSQ…KQSSSGFVKA (62 aa)), are a transit peptide targeting the chloroplast. 2 residues coordinate dipyrromethane: Arg80 and Ser82. Position 123 is a phosphoserine (Ser123). Dipyrromethane is bound by residues 156 to 157 (KD), 200 to 206 (TASLRRK), and 223 to 229 (RGNVQTR). Catalysis depends on Asp157, which acts as the Proton donor/acceptor. Cys316 carries the post-translational modification S-(dipyrrolylmethanemethyl)cysteine.

This sequence belongs to the HMBS family. As to quaternary structure, monomer. Dipyrromethane is required as a cofactor.

Its subcellular location is the plastid. The protein localises to the chloroplast. The catalysed reaction is 4 porphobilinogen + H2O = hydroxymethylbilane + 4 NH4(+). Its pathway is porphyrin-containing compound metabolism; protoporphyrin-IX biosynthesis; coproporphyrinogen-III from 5-aminolevulinate: step 2/4. It functions in the pathway porphyrin-containing compound metabolism; chlorophyll biosynthesis. With respect to regulation, inhibited by NH(3), heavy-metal ions, hydroxylamine and 2-bromoporphobilinogen. Not inhibited by N-ethylmaleimide. In terms of biological role, tetrapolymerization of the monopyrrole PBG into the hydroxymethylbilane pre-uroporphyrinogen in several discrete steps. The chain is Porphobilinogen deaminase, chloroplastic (HEMC) from Arabidopsis thaliana (Mouse-ear cress).